Here is a 185-residue protein sequence, read N- to C-terminus: Ribosome-recycling factor (185 aa).

It belongs to the RRF family.

The protein resides in the cytoplasm. Responsible for the release of ribosomes from messenger RNA at the termination of protein biosynthesis. May increase the efficiency of translation by recycling ribosomes from one round of translation to another. The protein is Ribosome-recycling factor of Pseudomonas savastanoi pv. phaseolicola (strain 1448A / Race 6) (Pseudomonas syringae pv. phaseolicola (strain 1448A / Race 6)).